Here is a 71-residue protein sequence, read N- to C-terminus: Mitotic-spindle organizing protein 1B (71 aa).

This sequence belongs to the MOZART1 family. In terms of assembly, homo- and heteromultimer. Part of the gamma-tubulin complex. Interacts with TUBB2/TUBB3, GIP2, GCP3 and TSA1 (via C-terminal domain). As to expression, mostly expressed in siliques and flowers, and, to a lower extent, in leaves, roots and seedlings, with highest levels in young tissues and meristematic cells, and the vasculature.

It localises to the cytoplasm. It is found in the cytoskeleton. Its subcellular location is the microtubule organizing center. The protein resides in the spindle. The protein localises to the nucleus. It localises to the phragmoplast. It is found in the nucleus envelope. Required for gamma-tubulin complex recruitment to the microtubule organizing centers (MTOCs). During mitosis, modulates gamma-tubulin complex localization, spindle stability and chromosomal segregation. Necessary for gametophyte development and embryogenesis. In Arabidopsis thaliana (Mouse-ear cress), this protein is Mitotic-spindle organizing protein 1B (GIP1).